The chain runs to 367 residues: UDP-N-acetylglucosamine--N-acetylmuramyl-(pentapeptide) pyrophosphoryl-undecaprenol N-acetylglucosamine transferase (367 aa).

UDP-N-acetyl-alpha-D-glucosamine is bound by residues 22–24 (TGG), N134, R170, S198, I253, and Q298.

This sequence belongs to the glycosyltransferase 28 family. MurG subfamily.

The protein localises to the cell inner membrane. It catalyses the reaction di-trans,octa-cis-undecaprenyl diphospho-N-acetyl-alpha-D-muramoyl-L-alanyl-D-glutamyl-meso-2,6-diaminopimeloyl-D-alanyl-D-alanine + UDP-N-acetyl-alpha-D-glucosamine = di-trans,octa-cis-undecaprenyl diphospho-[N-acetyl-alpha-D-glucosaminyl-(1-&gt;4)]-N-acetyl-alpha-D-muramoyl-L-alanyl-D-glutamyl-meso-2,6-diaminopimeloyl-D-alanyl-D-alanine + UDP + H(+). Its pathway is cell wall biogenesis; peptidoglycan biosynthesis. Functionally, cell wall formation. Catalyzes the transfer of a GlcNAc subunit on undecaprenyl-pyrophosphoryl-MurNAc-pentapeptide (lipid intermediate I) to form undecaprenyl-pyrophosphoryl-MurNAc-(pentapeptide)GlcNAc (lipid intermediate II). This is UDP-N-acetylglucosamine--N-acetylmuramyl-(pentapeptide) pyrophosphoryl-undecaprenol N-acetylglucosamine transferase from Xylella fastidiosa (strain M23).